We begin with the raw amino-acid sequence, 909 residues long: Villin-1 (909 aa).

6 Gelsolin-like repeats span residues Lys29–Ile79, Val149–Ala189, Gly262–Lys305, Leu391–Ala448, Met529–Glu569, and Leu631–Glu672. 2 disordered regions span residues Ser733 to Glu781 and Asp816 to Arg835. The span at Gln752–Gln762 shows a compositional bias: basic and acidic residues. Ser780 bears the Phosphoserine mark. An HP domain is found at Ser844–Phe909.

It belongs to the villin/gelsolin family. In terms of tissue distribution, expressed in all tissues examined. Mainly detected in the vascular tissue and the pericycle of roots and in the vasculature of leaves. Not expressed in the root cap.

The protein resides in the cytoplasm. The protein localises to the cytoskeleton. Functionally, binds actin and actin filament bundles in a Ca(2+)/calmodulin-insensitive manner, but is unable to sever, cap, and nucleate actin filament formation in vitro. Does not protect individual filaments from severing by VLN3 (AC O81645). The chain is Villin-1 from Arabidopsis thaliana (Mouse-ear cress).